The chain runs to 107 residues: Protein HitA (107 aa).

One can recognise an HIT domain in the interval 5–107 (IFCKIAAKEI…LHIHIMGTPV (103 aa)). The short motif at 97-101 (HLHIH) is the Histidine triad motif element.

This chain is Protein HitA (hitA), found in Neisseria gonorrhoeae.